We begin with the raw amino-acid sequence, 285 residues long: Probable endonuclease 4 (285 aa).

Residues H69, H109, E145, D179, H182, H216, D229, H231, and E261 each coordinate Zn(2+).

The protein belongs to the AP endonuclease 2 family. Requires Zn(2+) as cofactor.

The enzyme catalyses Endonucleolytic cleavage to 5'-phosphooligonucleotide end-products.. In terms of biological role, endonuclease IV plays a role in DNA repair. It cleaves phosphodiester bonds at apurinic or apyrimidinic (AP) sites, generating a 3'-hydroxyl group and a 5'-terminal sugar phosphate. This is Probable endonuclease 4 from Salmonella dublin (strain CT_02021853).